Consider the following 127-residue polypeptide: UPF0102 protein ERGA_CDS_00540 (127 aa).

Belongs to the UPF0102 family.

This is UPF0102 protein ERGA_CDS_00540 from Ehrlichia ruminantium (strain Gardel).